The sequence spans 135 residues: Holo-[acyl-carrier-protein] synthase (135 aa).

Positions 7 and 57 each coordinate Mg(2+).

The protein belongs to the P-Pant transferase superfamily. AcpS family. It depends on Mg(2+) as a cofactor.

It is found in the cytoplasm. The enzyme catalyses apo-[ACP] + CoA = holo-[ACP] + adenosine 3',5'-bisphosphate + H(+). Transfers the 4'-phosphopantetheine moiety from coenzyme A to a Ser of acyl-carrier-protein. This chain is Holo-[acyl-carrier-protein] synthase, found in Corynebacterium glutamicum (strain ATCC 13032 / DSM 20300 / JCM 1318 / BCRC 11384 / CCUG 27702 / LMG 3730 / NBRC 12168 / NCIMB 10025 / NRRL B-2784 / 534).